The following is a 148-amino-acid chain: Deoxyuridine 5'-triphosphate nucleotidohydrolase (148 aa).

Substrate is bound by residues 67-69, Asn80, 84-86, and Met94; these read RSG and LID.

This sequence belongs to the dUTPase family. Mg(2+) is required as a cofactor.

The catalysed reaction is dUTP + H2O = dUMP + diphosphate + H(+). It participates in pyrimidine metabolism; dUMP biosynthesis; dUMP from dCTP (dUTP route): step 2/2. Functionally, this enzyme is involved in nucleotide metabolism: it produces dUMP, the immediate precursor of thymidine nucleotides and it decreases the intracellular concentration of dUTP so that uracil cannot be incorporated into DNA. The protein is Deoxyuridine 5'-triphosphate nucleotidohydrolase of Burkholderia mallei (strain NCTC 10247).